The chain runs to 632 residues: tRNA uridine 5-carboxymethylaminomethyl modification enzyme MnmG (632 aa).

Position 13–18 (13–18 (GGGHAG)) interacts with FAD. 274–288 (GPRYCPSIEDKVMRF) provides a ligand contact to NAD(+).

It belongs to the MnmG family. As to quaternary structure, homodimer. Heterotetramer of two MnmE and two MnmG subunits. FAD is required as a cofactor.

Its subcellular location is the cytoplasm. Functionally, NAD-binding protein involved in the addition of a carboxymethylaminomethyl (cmnm) group at the wobble position (U34) of certain tRNAs, forming tRNA-cmnm(5)s(2)U34. The chain is tRNA uridine 5-carboxymethylaminomethyl modification enzyme MnmG from Dichelobacter nodosus (strain VCS1703A).